A 291-amino-acid polypeptide reads, in one-letter code: Elongation factor Ts (291 aa).

An involved in Mg(2+) ion dislocation from EF-Tu region spans residues 79–82; that stretch reads TDFV.

The protein belongs to the EF-Ts family.

Its subcellular location is the cytoplasm. In terms of biological role, associates with the EF-Tu.GDP complex and induces the exchange of GDP to GTP. It remains bound to the aminoacyl-tRNA.EF-Tu.GTP complex up to the GTP hydrolysis stage on the ribosome. The sequence is that of Elongation factor Ts from Jannaschia sp. (strain CCS1).